A 349-amino-acid polypeptide reads, in one-letter code: Twinfilin-2 (349 aa).

2 ADF-H domains span residues 4–139 (QTGI…KHVS) and 177–313 (GLAF…DEVH). Residues 324-349 (AKPKGPVGKRGQKRLIKGPGENGEDS) form a disordered region.

The protein belongs to the actin-binding proteins ADF family. Twinfilin subfamily. Interacts with G-actin; ADP-actin form and capping protein (CP).

The protein resides in the cytoplasm. Its subcellular location is the cytoskeleton. It localises to the perinuclear region. In terms of biological role, actin-binding protein involved in motile and morphological processes. Inhibits actin polymerization, likely by sequestering G-actin. In Gallus gallus (Chicken), this protein is Twinfilin-2 (TWF2).